The sequence spans 188 residues: Cytochrome c oxidase assembly protein CtaG (188 aa).

Residues M1–N8 are Cytoplasmic-facing. Residues L9–Y31 form a helical; Signal-anchor for type II membrane protein membrane-spanning segment. Residues N32–N188 are Periplasmic-facing.

This sequence belongs to the COX11/CtaG family.

Its subcellular location is the cell inner membrane. Functionally, exerts its effect at some terminal stage of cytochrome c oxidase synthesis, probably by being involved in the insertion of the copper B into subunit I. The polypeptide is Cytochrome c oxidase assembly protein CtaG (Rickettsia conorii (strain ATCC VR-613 / Malish 7)).